The following is a 233-amino-acid chain: 5'-methylthioadenosine/S-adenosylhomocysteine nucleosidase (233 aa).

Glu12 (proton acceptor) is an active-site residue. Residues Gly78, Ile152, and 173–174 contribute to the substrate site; that span reads ME. Catalysis depends on Asp197, which acts as the Proton donor.

The protein belongs to the PNP/UDP phosphorylase family. MtnN subfamily. Homodimer.

It catalyses the reaction S-adenosyl-L-homocysteine + H2O = S-(5-deoxy-D-ribos-5-yl)-L-homocysteine + adenine. The enzyme catalyses S-methyl-5'-thioadenosine + H2O = 5-(methylsulfanyl)-D-ribose + adenine. The catalysed reaction is 5'-deoxyadenosine + H2O = 5-deoxy-D-ribose + adenine. It participates in amino-acid biosynthesis; L-methionine biosynthesis via salvage pathway; S-methyl-5-thio-alpha-D-ribose 1-phosphate from S-methyl-5'-thioadenosine (hydrolase route): step 1/2. Functionally, catalyzes the irreversible cleavage of the glycosidic bond in both 5'-methylthioadenosine (MTA) and S-adenosylhomocysteine (SAH/AdoHcy) to adenine and the corresponding thioribose, 5'-methylthioribose and S-ribosylhomocysteine, respectively. Also cleaves 5'-deoxyadenosine, a toxic by-product of radical S-adenosylmethionine (SAM) enzymes, into 5-deoxyribose and adenine. Thus, is required for in vivo function of the radical SAM enzymes biotin synthase and lipoic acid synthase, that are inhibited by 5'-deoxyadenosine accumulation. This is 5'-methylthioadenosine/S-adenosylhomocysteine nucleosidase from Yersinia pestis bv. Antiqua (strain Angola).